The following is a 66-amino-acid chain: Large ribosomal subunit protein bL33c (66 aa).

This sequence belongs to the bacterial ribosomal protein bL33 family.

It localises to the plastid. The protein localises to the chloroplast. This chain is Large ribosomal subunit protein bL33c, found in Welwitschia mirabilis (Tree tumbo).